We begin with the raw amino-acid sequence, 588 residues long: Pleckstrin homology domain-containing family A member 4 (588 aa).

Residues 54–153 enclose the PH domain; sequence PVHIRGWLHK…WLRALGRASR (100 aa). 2 disordered regions span residues 155–349 and 495–588; these read EGED…QASM and AGLG…VDHL. Ser-164 bears the Phosphoserine mark. Basic and acidic residues predominate over residues 183 to 193; it reads VNRREEGRISE. Polar residues predominate over residues 211–222; sequence TPNSTVDLQTDT. Low complexity-rich tracts occupy residues 246-260 and 321-334; these read PRPRSAPARRPPLSA and QRTQSTQATSGSST. The residue at position 562 (Ser-562) is a Phosphoserine.

The protein resides in the cytoplasm. It is found in the membrane. Functionally, binds specifically to phosphatidylinositol 3-phosphate (PtdIns3P), but not to other phosphoinositides. This is Pleckstrin homology domain-containing family A member 4 (Plekha4) from Mus musculus (Mouse).